The chain runs to 252 residues: Flap endonuclease Xni (252 aa).

D105 contributes to the Mg(2+) binding site. Residues 162-251 (EQYQFLDFIA…EINLKQFRVK (90 aa)) enclose the 5'-3' exonuclease domain. Positions 172, 173, 181, 183, and 186 each coordinate K(+). The interval 185-190 (GIGPKS) is interaction with DNA.

It belongs to the Xni family. Mg(2+) serves as cofactor. The cofactor is K(+).

Has flap endonuclease activity. During DNA replication, flap endonucleases cleave the 5'-overhanging flap structure that is generated by displacement synthesis when DNA polymerase encounters the 5'-end of a downstream Okazaki fragment. In Shewanella denitrificans (strain OS217 / ATCC BAA-1090 / DSM 15013), this protein is Flap endonuclease Xni.